The sequence spans 116 residues: Large ribosomal subunit protein uL18 (116 aa).

The protein belongs to the universal ribosomal protein uL18 family. In terms of assembly, part of the 50S ribosomal subunit; part of the 5S rRNA/L5/L18/L25 subcomplex. Contacts the 5S and 23S rRNAs.

This is one of the proteins that bind and probably mediate the attachment of the 5S RNA into the large ribosomal subunit, where it forms part of the central protuberance. The sequence is that of Large ribosomal subunit protein uL18 from Mycoplasma capricolum subsp. capricolum (strain California kid / ATCC 27343 / NCTC 10154).